The primary structure comprises 620 residues: Preterminal protein (620 aa).

The Nuclear localization signal motif lies at 356–365; the sequence is RLPMRRRRRR. Position 545 is an O-(5'-phospho-DNA)-serine (S545).

Belongs to the adenoviridae terminal protein family. Heterodimer with the polymerase; this heterodimer binds to bp 9 to 18 of the genome. Interacts with host POU2F1; POU2F1 binds to the auxiliary sequences in the inverted terminal repeats and tethers the pTP-POL heterodimer to the origin DNA thereby participating in the assembly of the pre-initiation complex (POL-TP-DBP-NFIA-POU2F1). In terms of processing, preterminal protein is used to replicate viral genome, upon genomic encapsidation it is processed first into iTP and finally into TP by adenovirus protease.

The protein localises to the host nucleus matrix. Protein covalently bound to the viral DNA that acts as a primer for viral genomic replication by DNA strand displacement. Assembles on the viral origin of replication in an initiation complex with viral polymerase, DBP, host NFIA and host POU2F1/OCT1. During initiation, the polymerase covalently couples the first dCTP with Ser-580 of pTP. The terminal protein stimulates the template activity over 20 fold compared to protein-free templates. Neo-synthesized viral genomes are linked to two preterminal proteins, one for each 5' end. These new genomes are encapsidated in the nucleus, and during capsid maturation by viral protease, preterminal protein is first cleaved into intermediary (iTP), then into mature TP. May play a role in host nuclear matrix localization of genomic DNA. The chain is Preterminal protein from Bovine adenovirus 2 (BAdV-2).